Consider the following 94-residue polypeptide: U1-theraphotoxin-Sp1a (94 aa).

A signal peptide spans 1-22 (MIFLLPSIISVMLLAEPVLMLG). Residues 23–58 (DTEDADLMEMVQLSRPFFNPIIRAVELVELREERQR) constitute a propeptide that is removed on maturation. Cystine bridges form between C60–C78, C67–C83, and C77–C88. Residue V92 is modified to Valine amide.

It belongs to the neurotoxin 14 (magi-1) family. OAIP-1 subfamily. As to expression, expressed by the venom gland.

Its subcellular location is the secreted. In terms of biological role, probable ion channel inhibitor. Shows insecticidal activity. Acts synergistically with the neonicotinoid insecticide imidacloprid. Is neither a repellent that repels insects nor an attractant that is preferentially consumed by insects. Is very stable. This is U1-theraphotoxin-Sp1a from Selenotypus plumipes (Australian featherleg tarantula).